We begin with the raw amino-acid sequence, 321 residues long: Cytochrome f (321 aa).

Residues 1–38 (MINLFLLKYKTAFSTFLKPFAYLSLILSVCFYSIQAQA) form the signal peptide. Positions 39, 59, 62, and 63 each coordinate heme. The helical transmembrane segment at 287–306 (VKGLIAFFFTVILAQILLVL) threads the bilayer.

It belongs to the cytochrome f family. The 4 large subunits of the cytochrome b6-f complex are cytochrome b6, subunit IV (17 kDa polypeptide, petD), cytochrome f and the Rieske protein, while the 4 small subunits are PetG, PetL, PetM and PetN. The complex functions as a dimer. Requires heme as cofactor.

Its subcellular location is the plastid. The protein resides in the chloroplast thylakoid membrane. Component of the cytochrome b6-f complex, which mediates electron transfer between photosystem II (PSII) and photosystem I (PSI), cyclic electron flow around PSI, and state transitions. The chain is Cytochrome f (petA) from Guillardia theta (Cryptophyte).